We begin with the raw amino-acid sequence, 382 residues long: 3-dehydroquinate synthase (382 aa).

NAD(+) is bound by residues 115 to 119, 139 to 140, Lys-152, and Lys-161; these read GVVGD and TS. Zn(2+) is bound by residues Glu-194, His-256, and His-274.

It belongs to the sugar phosphate cyclases superfamily. Dehydroquinate synthase family. Requires Co(2+) as cofactor. The cofactor is Zn(2+). NAD(+) serves as cofactor.

The protein localises to the cytoplasm. It catalyses the reaction 7-phospho-2-dehydro-3-deoxy-D-arabino-heptonate = 3-dehydroquinate + phosphate. It functions in the pathway metabolic intermediate biosynthesis; chorismate biosynthesis; chorismate from D-erythrose 4-phosphate and phosphoenolpyruvate: step 2/7. Functionally, catalyzes the conversion of 3-deoxy-D-arabino-heptulosonate 7-phosphate (DAHP) to dehydroquinate (DHQ). The sequence is that of 3-dehydroquinate synthase from Rhodopseudomonas palustris (strain BisB18).